Consider the following 327-residue polypeptide: Undecaprenyl-phosphate 4-deoxy-4-formamido-L-arabinose transferase (327 aa).

A run of 2 helical transmembrane segments spans residues Leu-236–Val-256 and Val-270–Leu-290.

The protein belongs to the glycosyltransferase 2 family.

It localises to the cell inner membrane. It carries out the reaction UDP-4-deoxy-4-formamido-beta-L-arabinose + di-trans,octa-cis-undecaprenyl phosphate = 4-deoxy-4-formamido-alpha-L-arabinopyranosyl di-trans,octa-cis-undecaprenyl phosphate + UDP. Its pathway is glycolipid biosynthesis; 4-amino-4-deoxy-alpha-L-arabinose undecaprenyl phosphate biosynthesis; 4-amino-4-deoxy-alpha-L-arabinose undecaprenyl phosphate from UDP-4-deoxy-4-formamido-beta-L-arabinose and undecaprenyl phosphate: step 1/2. The protein operates within bacterial outer membrane biogenesis; lipopolysaccharide biosynthesis. Functionally, catalyzes the transfer of 4-deoxy-4-formamido-L-arabinose from UDP to undecaprenyl phosphate. The modified arabinose is attached to lipid A and is required for resistance to polymyxin and cationic antimicrobial peptides. In Enterobacter sp. (strain 638), this protein is Undecaprenyl-phosphate 4-deoxy-4-formamido-L-arabinose transferase.